The following is a 504-amino-acid chain: Pyruvate kinase (504 aa).

Substrate is bound at residue R53. K(+)-binding residues include N55, S57, D88, and T89. 55–58 provides a ligand contact to ATP; that stretch reads NFSH. Positions 95 and 181 each coordinate ATP. E246 is a binding site for Mg(2+). The substrate site is built by G269, D270, and T302. D270 provides a ligand contact to Mg(2+).

This sequence belongs to the pyruvate kinase family. As to quaternary structure, homotetramer. Requires Mg(2+) as cofactor. The cofactor is K(+).

The catalysed reaction is pyruvate + ATP = phosphoenolpyruvate + ADP + H(+). Its pathway is carbohydrate degradation; glycolysis; pyruvate from D-glyceraldehyde 3-phosphate: step 5/5. This chain is Pyruvate kinase (PYK1), found in Debaryomyces hansenii (strain ATCC 36239 / CBS 767 / BCRC 21394 / JCM 1990 / NBRC 0083 / IGC 2968) (Yeast).